Consider the following 261-residue polypeptide: 5'-nucleotidase SurE (261 aa).

Residues Asp18, Asp19, Ser50, and Asn102 each contribute to the a divalent metal cation site.

This sequence belongs to the SurE nucleotidase family. A divalent metal cation is required as a cofactor.

Its subcellular location is the cytoplasm. The enzyme catalyses a ribonucleoside 5'-phosphate + H2O = a ribonucleoside + phosphate. Nucleotidase that shows phosphatase activity on nucleoside 5'-monophosphates. This Rhodospirillum rubrum (strain ATCC 11170 / ATH 1.1.1 / DSM 467 / LMG 4362 / NCIMB 8255 / S1) protein is 5'-nucleotidase SurE.